Consider the following 115-residue polypeptide: Large ribosomal subunit protein bL20 (115 aa).

This sequence belongs to the bacterial ribosomal protein bL20 family.

Its function is as follows. Binds directly to 23S ribosomal RNA and is necessary for the in vitro assembly process of the 50S ribosomal subunit. It is not involved in the protein synthesizing functions of that subunit. This Parasynechococcus marenigrum (strain WH8102) protein is Large ribosomal subunit protein bL20.